We begin with the raw amino-acid sequence, 338 residues long: Replication factor C subunit 3 (338 aa).

Gly-57–Thr-64 is a binding site for ATP.

It belongs to the activator 1 small subunits family. As to quaternary structure, heteropentamer of subunits RFC1, RFC2, RFC3, RFC4 and RFC5 that forms a complex with PCNA in the presence of ATP.

The protein resides in the nucleus. Its function is as follows. The elongation of primed DNA templates by DNA polymerase delta and epsilon requires the action of the accessory proteins proliferating cell nuclear antigen (PCNA) and activator 1. Subunit 3 binds ATP. The protein is Replication factor C subunit 3 (RFC3) of Blastobotrys adeninivorans (Yeast).